A 161-amino-acid polypeptide reads, in one-letter code: Transcriptional repressor NrdR (161 aa).

A zinc finger spans residues 3-34; that stretch reads CPSCQHTDSRVLESRAADSGKSVRRRRECLNC. An ATP-cone domain is found at 49–139; that stretch reads ITVVKRSGTR…VYGKFSGISD (91 aa).

It belongs to the NrdR family. The cofactor is Zn(2+).

Negatively regulates transcription of bacterial ribonucleotide reductase nrd genes and operons by binding to NrdR-boxes. The chain is Transcriptional repressor NrdR from Synechococcus sp. (strain RCC307).